The chain runs to 238 residues: MGIPVEVLTKFIGQKVKDVYGRDAGVIVHVYTEIDGTITGIELFKGEEIKTYSPNSVKVDGDSVVILPDWKTDSLKVLGQMEKIRKRQRALEELYSRQEIPKSTYEDMKRKLDSELLKIRDEHSRLKGRLKDRLNSIEDQVAQIDRAMIALKINYISGEIPELAYKNSMEILRLSRDSYALERDDIKKTLDKLDGLDKEVIELKPSASLNTSTEQSNKNEGNKSEVSVPIPVRVINTL.

As to quaternary structure, interacts with CdvB.

The protein localises to the cytoplasm. It is found in the nucleoid. The protein resides in the cell membrane. Functionally, part of a cell division machinery. The CdvA, CdvB and CdvC proteins polymerize between segregating nucleoids and persist throughout cell division, forming a successively smaller structure during constriction. CdvA is a membrane interacting protein that recruits ESCRT-III homologs to the membrane. This is Cell division protein A from Sulfolobus acidocaldarius (strain ATCC 33909 / DSM 639 / JCM 8929 / NBRC 15157 / NCIMB 11770).